The chain runs to 37 residues: Large ribosomal subunit protein bL36 (37 aa).

It belongs to the bacterial ribosomal protein bL36 family.

This is Large ribosomal subunit protein bL36 from Rippkaea orientalis (strain PCC 8801 / RF-1) (Cyanothece sp. (strain PCC 8801)).